The primary structure comprises 175 residues: Shikimate kinase (175 aa).

An ATP-binding site is contributed by 17-22 (GAGKST). Ser21 serves as a coordination point for Mg(2+). Substrate contacts are provided by Asp39, Arg63, and Gly85. Arg123 provides a ligand contact to ATP. Arg142 contacts substrate. Gln159 is an ATP binding site.

This sequence belongs to the shikimate kinase family. As to quaternary structure, monomer. The cofactor is Mg(2+).

It is found in the cytoplasm. It catalyses the reaction shikimate + ATP = 3-phosphoshikimate + ADP + H(+). It participates in metabolic intermediate biosynthesis; chorismate biosynthesis; chorismate from D-erythrose 4-phosphate and phosphoenolpyruvate: step 5/7. Catalyzes the specific phosphorylation of the 3-hydroxyl group of shikimic acid using ATP as a cosubstrate. This is Shikimate kinase from Photobacterium profundum (strain SS9).